Consider the following 346-residue polypeptide: Ketol-acid reductoisomerase (NADP(+)) (346 aa).

Residues 1–141 (KKNSILKKNQ…GAHHAGVLES (141 aa)) enclose the KARI N-terminal Rossmann domain. NADP(+)-binding positions include Ser11 and 41–43 (DKQ). His65 is an active-site residue. NADP(+) is bound at residue Gly91. KARI C-terminal knotted domains are found at residues 142 to 286 (SFVA…PEQE) and 287 to 346 (YYDH…NKVI). The Mg(2+) site is built by Asp150, Glu154, Glu322, and Glu326.

The protein belongs to the ketol-acid reductoisomerase family. Mg(2+) is required as a cofactor.

The catalysed reaction is (2R)-2,3-dihydroxy-3-methylbutanoate + NADP(+) = (2S)-2-acetolactate + NADPH + H(+). It carries out the reaction (2R,3R)-2,3-dihydroxy-3-methylpentanoate + NADP(+) = (S)-2-ethyl-2-hydroxy-3-oxobutanoate + NADPH + H(+). Its pathway is amino-acid biosynthesis; L-isoleucine biosynthesis; L-isoleucine from 2-oxobutanoate: step 2/4. It functions in the pathway amino-acid biosynthesis; L-valine biosynthesis; L-valine from pyruvate: step 2/4. In terms of biological role, involved in the biosynthesis of branched-chain amino acids (BCAA). Catalyzes an alkyl-migration followed by a ketol-acid reduction of (S)-2-acetolactate (S2AL) to yield (R)-2,3-dihydroxy-isovalerate. In the isomerase reaction, S2AL is rearranged via a Mg-dependent methyl migration to produce 3-hydroxy-3-methyl-2-ketobutyrate (HMKB). In the reductase reaction, this 2-ketoacid undergoes a metal-dependent reduction by NADPH to yield (R)-2,3-dihydroxy-isovalerate. The polypeptide is Ketol-acid reductoisomerase (NADP(+)) (ilvC) (Buchnera aphidicola subsp. Uroleucon rurale).